A 158-amino-acid chain; its full sequence is Transcriptional repressor NrdR (158 aa).

A zinc finger lies at 3–34; it reads CPSCQNTDSRVLESRAADGGRSVRRRRECLNC. The region spanning 49-139 is the ATP-cone domain; sequence ITVIKRDGCR…VYRQFRGIDD (91 aa).

It belongs to the NrdR family. Zn(2+) is required as a cofactor.

Its function is as follows. Negatively regulates transcription of bacterial ribonucleotide reductase nrd genes and operons by binding to NrdR-boxes. This chain is Transcriptional repressor NrdR, found in Synechococcus sp. (strain CC9902).